The following is a 302-amino-acid chain: Ubiquinone biosynthesis protein COQ4, mitochondrial (302 aa).

The transit peptide at 1–19 (MNSSPARAVRALVQSQSRQ) directs the protein to the mitochondrion. Residues H176, D177, H180, and E192 each contribute to the Zn(2+) site. Over residues 268-282 (PPPDMRDARKRERDA) the composition is skewed to basic and acidic residues. The tract at residues 268 to 302 (PPPDMRDARKRERDARRRRKQLETEAQQGLDAASL) is disordered.

Belongs to the COQ4 family. In terms of assembly, component of a multi-subunit COQ enzyme complex, composed of at least COQ3, COQ4, COQ5, COQ6, COQ7 and COQ9. Requires Zn(2+) as cofactor.

The protein resides in the mitochondrion inner membrane. The enzyme catalyses a 4-hydroxy-3-methoxy-5-(all-trans-polyprenyl)benzoate + H(+) = a 2-methoxy-6-(all-trans-polyprenyl)phenol + CO2. The protein operates within cofactor biosynthesis; ubiquinone biosynthesis. In terms of biological role, lyase that catalyzes the C1-decarboxylation of 4-hydroxy-3-methoxy-5-(all-trans-polyprenyl)benzoic acid into 2-methoxy-6-(all-trans-polyprenyl)phenol during ubiquinone biosynthesis. This Pyricularia oryzae (strain 70-15 / ATCC MYA-4617 / FGSC 8958) (Rice blast fungus) protein is Ubiquinone biosynthesis protein COQ4, mitochondrial.